Consider the following 134-residue polypeptide: uncharacterized protein (134 aa).

An N-terminal signal peptide occupies residues 1 to 23 (MWHLRCSNWRGSGVFGMCFSLSG). The N-palmitoyl cysteine moiety is linked to residue Cys24. Cys24 is lipidated: S-diacylglycerol cysteine.

The protein resides in the cell membrane. This is an uncharacterized protein from Treponema pallidum (strain Nichols).